We begin with the raw amino-acid sequence, 481 residues long: Proline--tRNA ligase 2 (481 aa).

This sequence belongs to the class-II aminoacyl-tRNA synthetase family. ProS type 3 subfamily. Homodimer.

The protein resides in the cytoplasm. The catalysed reaction is tRNA(Pro) + L-proline + ATP = L-prolyl-tRNA(Pro) + AMP + diphosphate. In terms of biological role, catalyzes the attachment of proline to tRNA(Pro) in a two-step reaction: proline is first activated by ATP to form Pro-AMP and then transferred to the acceptor end of tRNA(Pro). The chain is Proline--tRNA ligase 2 from Clostridioides difficile (strain 630) (Peptoclostridium difficile).